Reading from the N-terminus, the 459-residue chain is Cysteine--tRNA ligase (459 aa).

A Zn(2+)-binding site is contributed by Cys29. The 'HIGH' region signature appears at Pro31–Asn41. Cys209, His234, and Glu238 together coordinate Zn(2+). A 'KMSKS' region motif is present at residues Lys266 to Ser270. ATP is bound at residue Lys269.

This sequence belongs to the class-I aminoacyl-tRNA synthetase family. In terms of assembly, monomer. It depends on Zn(2+) as a cofactor.

Its subcellular location is the cytoplasm. It catalyses the reaction tRNA(Cys) + L-cysteine + ATP = L-cysteinyl-tRNA(Cys) + AMP + diphosphate. This is Cysteine--tRNA ligase from Paramagnetospirillum magneticum (strain ATCC 700264 / AMB-1) (Magnetospirillum magneticum).